The primary structure comprises 364 residues: MSLQSIKYSRGSLEILDQLLLPGQSKYVVVRGVEDGWKVINKMQVRGAPAIAIVGCLSLAVEINPEDFENKKSLRQEIEGKLNYLVSARPTAVNMKIAADELITLANELYKDEAIDVTQMKHRFLDATEAMLKKDIADNRAIGANGAQAILQRVAKAGKTTAGTTGSVRVLTHCNTGSLATAGYGTALGVVRQLAELGKLEHVYCTETRPYNQGARLTAYELVHEKFPATLVLDSMVAALLRAKNVAAVVVGADRVASNGDTANKIGTYQIAVVAKHHDVPFYVAAPLTSIDLAIPGGDHIIIEERPDREMTHVGEHRIAAPGINCWNPAFDVTPASLITGIITERGVFKPAELKEAITKLLES.

Asp254 acts as the Proton donor in catalysis.

The protein belongs to the eIF-2B alpha/beta/delta subunits family. MtnA subfamily.

Its subcellular location is the cytoplasm. It is found in the nucleus. The enzyme catalyses 5-(methylsulfanyl)-alpha-D-ribose 1-phosphate = 5-(methylsulfanyl)-D-ribulose 1-phosphate. Its pathway is amino-acid biosynthesis; L-methionine biosynthesis via salvage pathway; L-methionine from S-methyl-5-thio-alpha-D-ribose 1-phosphate: step 1/6. Catalyzes the interconversion of methylthioribose-1-phosphate (MTR-1-P) into methylthioribulose-1-phosphate (MTRu-1-P). In Drosophila sechellia (Fruit fly), this protein is Methylthioribose-1-phosphate isomerase.